Here is a 444-residue protein sequence, read N- to C-terminus: UDP-N-acetylmuramate--L-alanine ligase (444 aa).

110–116 (GAHGKTS) is an ATP binding site.

It belongs to the MurCDEF family.

The protein resides in the cytoplasm. It catalyses the reaction UDP-N-acetyl-alpha-D-muramate + L-alanine + ATP = UDP-N-acetyl-alpha-D-muramoyl-L-alanine + ADP + phosphate + H(+). It functions in the pathway cell wall biogenesis; peptidoglycan biosynthesis. In terms of biological role, cell wall formation. This Streptococcus sanguinis (strain SK36) protein is UDP-N-acetylmuramate--L-alanine ligase.